We begin with the raw amino-acid sequence, 549 residues long: Chaperonin GroEL 2 (549 aa).

ATP contacts are provided by residues 29–32 (TLGP), K50, 86–90 (DGTTT), G414, 477–479 (NAA), and D493.

This sequence belongs to the chaperonin (HSP60) family. In terms of assembly, forms a cylinder of 14 subunits composed of two heptameric rings stacked back-to-back. Interacts with the co-chaperonin GroES.

The protein resides in the cytoplasm. The catalysed reaction is ATP + H2O + a folded polypeptide = ADP + phosphate + an unfolded polypeptide.. Its function is as follows. Together with its co-chaperonin GroES, plays an essential role in assisting protein folding. The GroEL-GroES system forms a nano-cage that allows encapsulation of the non-native substrate proteins and provides a physical environment optimized to promote and accelerate protein folding. This is Chaperonin GroEL 2 from Myxococcus xanthus (strain DK1622).